The primary structure comprises 103 residues: G0/G1 switch protein 2 (103 aa).

In terms of assembly, directly interacts with BCL2; this interaction prevents the formation of the anti-apoptotic BAX-BCL2 complex.

The protein resides in the mitochondrion. Functionally, promotes apoptosis by binding to BCL2, hence preventing the formation of protective BCL2-BAX heterodimers. In Rattus norvegicus (Rat), this protein is G0/G1 switch protein 2 (G0s2).